A 144-amino-acid polypeptide reads, in one-letter code: Prefoldin subunit alpha (144 aa).

Belongs to the prefoldin alpha subunit family. As to quaternary structure, heterohexamer of two alpha and four beta subunits.

Its subcellular location is the cytoplasm. Its function is as follows. Molecular chaperone capable of stabilizing a range of proteins. Seems to fulfill an ATP-independent, HSP70-like function in archaeal de novo protein folding. The sequence is that of Prefoldin subunit alpha from Methanococcus aeolicus (strain ATCC BAA-1280 / DSM 17508 / OCM 812 / Nankai-3).